Consider the following 926-residue polypeptide: Mating-type protein A-alpha Y3 (926 aa).

A DNA-binding region (homeobox) is located at residues 147-206; the sequence is YKKPRPKFHSEYTPLLELYFHFNAYPTFADRRMLAEKTGMQTRQITVWFQNHRRRAKGPL. Disordered regions lie at residues 238–281, 308–374, 424–452, and 625–734; these read SHLR…KVGK, QQAP…TSSA, GKGKPSQNLTSTPATFSTVPPRRTSSRLN, and RARK…MNES. 2 stretches are compositionally biased toward basic and acidic residues: residues 267 to 281 and 326 to 338; these read KKPDGDKEALRKVGK and NAQDVEMRDATKS. Residues 428 to 441 are compositionally biased toward polar residues; that stretch reads PSQNLTSTPATFST. The segment covering 632-660 has biased composition (basic and acidic residues); that stretch reads KQAEKEARKEEKRARKEAKQAKKDRKEQR. Low complexity-rich tracts occupy residues 669–687 and 699–724; these read STLDSSRASSVTSDASATS and SSASSVASARTPSLSSTSSRRSSGTS.

Its subcellular location is the nucleus. In terms of biological role, specifies A-alpha-3 mating-type. May regulate the expression of genes specific to the homokaryotic cell type. The sequence is that of Mating-type protein A-alpha Y3 from Schizophyllum commune (Split gill fungus).